Reading from the N-terminus, the 355-residue chain is Phosphate acyltransferase (355 aa).

This sequence belongs to the PlsX family. As to quaternary structure, homodimer. Probably interacts with PlsY.

The protein resides in the cytoplasm. It catalyses the reaction a fatty acyl-[ACP] + phosphate = an acyl phosphate + holo-[ACP]. Its pathway is lipid metabolism; phospholipid metabolism. In terms of biological role, catalyzes the reversible formation of acyl-phosphate (acyl-PO(4)) from acyl-[acyl-carrier-protein] (acyl-ACP). This enzyme utilizes acyl-ACP as fatty acyl donor, but not acyl-CoA. The protein is Phosphate acyltransferase of Rhodospirillum centenum (strain ATCC 51521 / SW).